We begin with the raw amino-acid sequence, 379 residues long: Chaperone protein DnaJ (379 aa).

The 66-residue stretch at 7–72 (CYYETLEVER…DKRAAYDRYG (66 aa)) folds into the J domain. The CR-type zinc-finger motif lies at 135–213 (GKTAQIEIPV…CTGSGRVTKE (79 aa)). Residues cysteine 148, cysteine 151, cysteine 165, cysteine 168, cysteine 187, cysteine 190, cysteine 201, and cysteine 204 each coordinate Zn(2+). CXXCXGXG motif repeat units lie at residues 148 to 155 (CESCSGTG), 165 to 172 (CSTCGGAG), 187 to 194 (CPSCQGRG), and 201 to 208 (CPSCTGSG).

Belongs to the DnaJ family. In terms of assembly, homodimer. Requires Zn(2+) as cofactor.

It is found in the cytoplasm. Functionally, participates actively in the response to hyperosmotic and heat shock by preventing the aggregation of stress-denatured proteins and by disaggregating proteins, also in an autonomous, DnaK-independent fashion. Unfolded proteins bind initially to DnaJ; upon interaction with the DnaJ-bound protein, DnaK hydrolyzes its bound ATP, resulting in the formation of a stable complex. GrpE releases ADP from DnaK; ATP binding to DnaK triggers the release of the substrate protein, thus completing the reaction cycle. Several rounds of ATP-dependent interactions between DnaJ, DnaK and GrpE are required for fully efficient folding. Also involved, together with DnaK and GrpE, in the DNA replication of plasmids through activation of initiation proteins. This Rhodopseudomonas palustris (strain HaA2) protein is Chaperone protein DnaJ.